The chain runs to 444 residues: Chromosome partition protein MukF (444 aa).

Positions 212 to 240 (LDETSGNLRELQDTLNAAGDKLQAQLLRI) are leucine-zipper.

Belongs to the MukF family. As to quaternary structure, interacts, and probably forms a ternary complex, with MukE and MukB via its C-terminal region. The complex formation is stimulated by calcium or magnesium. It is required for an interaction between MukE and MukB.

The protein localises to the cytoplasm. Its subcellular location is the nucleoid. Its function is as follows. Involved in chromosome condensation, segregation and cell cycle progression. May participate in facilitating chromosome segregation by condensation DNA from both sides of a centrally located replisome during cell division. Not required for mini-F plasmid partitioning. Probably acts via its interaction with MukB and MukE. Overexpression results in anucleate cells. It has a calcium binding activity. The chain is Chromosome partition protein MukF from Haemophilus influenzae (strain PittGG).